Here is a 424-residue protein sequence, read N- to C-terminus: UDP-galactose transporter homolog 1 (424 aa).

The next 6 membrane-spanning stretches (helical) occupy residues 57 to 77, 107 to 127, 144 to 164, 173 to 193, 197 to 217, and 234 to 254; these read LWQL…WGVL, IVLN…YLYF, IIFP…FGYA, TFIL…LTIF, YPLY…TFTL, and TSGS…LDGL. N256 carries N-linked (GlcNAc...) asparagine glycosylation. 3 helical membrane-spanning segments follow: residues 293–313, 337–357, and 380–400; these read LLIM…PVPI, SVLG…YTLS, and VFWF…LVFG.

This sequence belongs to the nucleotide-sugar transporter family. SLC35B subfamily.

The protein localises to the endoplasmic reticulum membrane. Functionally, may be involved in specific transport of UDP-Gal from the cytosol to the Golgi lumen. Involved in the maintenance of optimal conditions for the folding of secretory pathway proteins in the endoplasmic reticulum. This is UDP-galactose transporter homolog 1 (hut1) from Emericella nidulans (strain FGSC A4 / ATCC 38163 / CBS 112.46 / NRRL 194 / M139) (Aspergillus nidulans).